The primary structure comprises 630 residues: Polypeptide N-acetylgalactosaminyltransferase 5 (630 aa).

The Cytoplasmic portion of the chain corresponds to 1-20; the sequence is MTFSTFTRKMRGRMRSNTCR. A helical; Signal-anchor for type II membrane protein membrane pass occupies residues 21 to 38; that stretch reads IVLLTSLVWVIFDFVLIA. The Lumenal segment spans residues 39–630; sequence RYSDCIGKDG…MESKFKWQAH (592 aa). N-linked (GlcNAc...) asparagine glycosylation occurs at Asn166. 5 disulfides stabilise this stretch: Cys177-Cys410, Cys401-Cys479, Cys513-Cys530, Cys553-Cys568, and Cys594-Cys611. The segment at 186 to 296 is catalytic subdomain A; that stretch reads LPTTSIVIVF…EGWLEPLLAR (111 aa). Residues Asp227 and Arg257 each coordinate substrate. Positions 280 and 282 each coordinate Mn(2+). The interval 356 to 418 is catalytic subdomain B; the sequence is PLRTPTMAGG…PCSHVGHVFR (63 aa). Trp387 serves as a coordination point for substrate. His415 lines the Mn(2+) pocket. Substrate contacts are provided by Arg418 and Tyr423. Positions 500 to 622 constitute a Ricin B-type lectin domain; the sequence is YYLGEIRNAE…YGKGQQWLME (123 aa).

It belongs to the glycosyltransferase 2 family. GalNAc-T subfamily. Mn(2+) is required as a cofactor. Expressed during oogenesis, in the somatically derived follicle cells that surround the developing oocyte, which are involved in the maturation of the oocyte and construction of the egg shell, as well as playing a role in subsequent embryonic pattern formation. During embryonic stages 9-11, expressed in the primordium of the foregut, midgut and hindgut. Expressed in salivary glands from embryonic stage 12 onwards. During embryonic stages 12-13, expressed in the posterior midgut and hindgut. During embryonic stages 14-17, expressed in the hindgut and the posterior spiracles. Expression is also detected in the epidermis and antennomaxillary complex at embryonic stages 16-17. In third instar larvae, ubiquitously expressed in wing, eye-antennal, leg and haltere imaginal disks.

It is found in the golgi apparatus membrane. The catalysed reaction is L-seryl-[protein] + UDP-N-acetyl-alpha-D-galactosamine = a 3-O-[N-acetyl-alpha-D-galactosaminyl]-L-seryl-[protein] + UDP + H(+). The enzyme catalyses L-threonyl-[protein] + UDP-N-acetyl-alpha-D-galactosamine = a 3-O-[N-acetyl-alpha-D-galactosaminyl]-L-threonyl-[protein] + UDP + H(+). It functions in the pathway protein modification; protein glycosylation. In terms of biological role, catalyzes the initial reaction in O-linked oligosaccharide biosynthesis, the transfer of an N-acetyl-D-galactosamine residue to a serine or threonine residue on the protein receptor. It can both act as a peptide transferase that transfers GalNAc onto unmodified peptide substrates, and as a glycopeptide transferase that requires the prior addition of a GalNAc on a peptide before adding additional GalNAc moieties. Prefers EA2 as substrate. In the larval midgut, required for O-glycosylation of apical and luminal proteins within copper cells enabling proper gut acidification. The sequence is that of Polypeptide N-acetylgalactosaminyltransferase 5 from Drosophila melanogaster (Fruit fly).